The following is a 312-amino-acid chain: 4-hydroxy-3-methylbut-2-enyl diphosphate reductase (312 aa).

Residue C15 coordinates [4Fe-4S] cluster. Positions 44 and 77 each coordinate (2E)-4-hydroxy-3-methylbut-2-enyl diphosphate. Dimethylallyl diphosphate contacts are provided by H44 and H77. Isopentenyl diphosphate-binding residues include H44 and H77. [4Fe-4S] cluster is bound at residue C99. Residue H127 participates in (2E)-4-hydroxy-3-methylbut-2-enyl diphosphate binding. Position 127 (H127) interacts with dimethylallyl diphosphate. H127 lines the isopentenyl diphosphate pocket. E129 acts as the Proton donor in catalysis. T167 lines the (2E)-4-hydroxy-3-methylbut-2-enyl diphosphate pocket. Position 197 (C197) interacts with [4Fe-4S] cluster. Residues S225, S226, N227, and S269 each contribute to the (2E)-4-hydroxy-3-methylbut-2-enyl diphosphate site. S225, S226, N227, and S269 together coordinate dimethylallyl diphosphate. 4 residues coordinate isopentenyl diphosphate: S225, S226, N227, and S269.

The protein belongs to the IspH family. [4Fe-4S] cluster serves as cofactor.

It catalyses the reaction isopentenyl diphosphate + 2 oxidized [2Fe-2S]-[ferredoxin] + H2O = (2E)-4-hydroxy-3-methylbut-2-enyl diphosphate + 2 reduced [2Fe-2S]-[ferredoxin] + 2 H(+). It carries out the reaction dimethylallyl diphosphate + 2 oxidized [2Fe-2S]-[ferredoxin] + H2O = (2E)-4-hydroxy-3-methylbut-2-enyl diphosphate + 2 reduced [2Fe-2S]-[ferredoxin] + 2 H(+). It participates in isoprenoid biosynthesis; dimethylallyl diphosphate biosynthesis; dimethylallyl diphosphate from (2E)-4-hydroxy-3-methylbutenyl diphosphate: step 1/1. Its pathway is isoprenoid biosynthesis; isopentenyl diphosphate biosynthesis via DXP pathway; isopentenyl diphosphate from 1-deoxy-D-xylulose 5-phosphate: step 6/6. In terms of biological role, catalyzes the conversion of 1-hydroxy-2-methyl-2-(E)-butenyl 4-diphosphate (HMBPP) into a mixture of isopentenyl diphosphate (IPP) and dimethylallyl diphosphate (DMAPP). Acts in the terminal step of the DOXP/MEP pathway for isoprenoid precursor biosynthesis. In Aromatoleum aromaticum (strain DSM 19018 / LMG 30748 / EbN1) (Azoarcus sp. (strain EbN1)), this protein is 4-hydroxy-3-methylbut-2-enyl diphosphate reductase.